A 300-amino-acid chain; its full sequence is Epimerase family protein SAB0724c (300 aa).

Belongs to the NAD(P)-dependent epimerase/dehydratase family. SDR39U1 subfamily.

In Staphylococcus aureus (strain bovine RF122 / ET3-1), this protein is Epimerase family protein SAB0724c.